Reading from the N-terminus, the 302-residue chain is L-glutamate/L-aspartate-binding protein (302 aa).

The signal sequence occupies residues 1-23 (MRIAPSLLSTAIVAALLSAPVVA).

The protein belongs to the bacterial solute-binding protein 3 family.

It localises to the periplasm. Binds L-glutamate and L-aspartate. This is L-glutamate/L-aspartate-binding protein from Pseudomonas aeruginosa (strain ATCC 15692 / DSM 22644 / CIP 104116 / JCM 14847 / LMG 12228 / 1C / PRS 101 / PAO1).